The sequence spans 494 residues: Poly(3-hydroxybutyrate) depolymerase (494 aa).

The N-terminal stretch at 1–25 (MAFNFIRAAAAGAAMALCGVGSVHA) is a signal peptide. S45 serves as the catalytic Nucleophile. Active-site charge relay system residues include D132 and H166. The 85-residue stretch at 347 to 431 (APTGVSTSGA…AAASGTTLAA (85 aa)) folds into the Fibronectin type-III domain.

The protein belongs to the AB hydrolase superfamily. Lipase family.

It localises to the secreted. The catalysed reaction is [(3R)-hydroxybutanoate](n) + H2O = [(3R)-hydroxybutanoate](n-2) + (3R)-hydroxybutanoate dimer + H(+). The enzyme catalyses [(3R)-hydroxybutanoate](n) + H2O = [(3R)-hydroxybutanoate](n-1) + (R)-3-hydroxybutanoate + H(+). It carries out the reaction (3R)-hydroxybutanoate dimer + H2O = 2 (R)-3-hydroxybutanoate + H(+). In terms of biological role, catalyzes the hydrolysis of poly(3-hydroxybutyrate) (PHB) film, producing the monomer and dimer of 3-hydroxybutyrate (3HB), while the 3HB trimer and tetramer are not formed. This is Poly(3-hydroxybutyrate) depolymerase from Delftia acidovorans (Pseudomonas acidovorans).